The sequence spans 368 residues: Alanine racemase (368 aa).

The active-site Proton acceptor; specific for D-alanine is the Lys40. Lys40 carries the post-translational modification N6-(pyridoxal phosphate)lysine. Residue Arg134 participates in substrate binding. Tyr263 functions as the Proton acceptor; specific for L-alanine in the catalytic mechanism. Met310 contacts substrate.

This sequence belongs to the alanine racemase family. It depends on pyridoxal 5'-phosphate as a cofactor.

It catalyses the reaction L-alanine = D-alanine. The protein operates within amino-acid biosynthesis; D-alanine biosynthesis; D-alanine from L-alanine: step 1/1. In terms of biological role, catalyzes the interconversion of L-alanine and D-alanine. May also act on other amino acids. This Listeria monocytogenes serotype 4b (strain CLIP80459) protein is Alanine racemase (alr).